The primary structure comprises 176 residues: Inorganic pyrophosphatase (176 aa).

Substrate is bound by residues Lys-30, Arg-44, and Tyr-56. Mg(2+) contacts are provided by Asp-66, Asp-71, and Asp-103. Tyr-142 contacts substrate.

This sequence belongs to the PPase family. In terms of assembly, homohexamer. Mg(2+) serves as cofactor.

It localises to the cytoplasm. It carries out the reaction diphosphate + H2O = 2 phosphate + H(+). Functionally, catalyzes the hydrolysis of inorganic pyrophosphate (PPi) forming two phosphate ions. The sequence is that of Inorganic pyrophosphatase from Salmonella typhi.